A 64-amino-acid chain; its full sequence is Large ribosomal subunit protein bL35 (64 aa).

This sequence belongs to the bacterial ribosomal protein bL35 family.

The sequence is that of Large ribosomal subunit protein bL35 from Ureaplasma urealyticum serovar 10 (strain ATCC 33699 / Western).